A 296-amino-acid polypeptide reads, in one-letter code: GTPase Era (296 aa).

In terms of domain architecture, Era-type G spans Lys7–Glu173. Residues Gly15–Ser22 are G1. Position 15–22 (Gly15–Ser22) interacts with GTP. The segment at Gln41–Asn45 is G2. The segment at Asp62 to Gly65 is G3. GTP contacts are provided by residues Asp62–Ile66 and Asn122–Asp125. Positions Asn122 to Asp125 are G4. Residues Ile152 to Ala154 are G5. The KH type-2 domain occupies Thr204–Glu281.

Belongs to the TRAFAC class TrmE-Era-EngA-EngB-Septin-like GTPase superfamily. Era GTPase family. As to quaternary structure, monomer.

Its subcellular location is the cytoplasm. It is found in the cell inner membrane. An essential GTPase that binds both GDP and GTP, with rapid nucleotide exchange. Plays a role in 16S rRNA processing and 30S ribosomal subunit biogenesis and possibly also in cell cycle regulation and energy metabolism. In Trichlorobacter lovleyi (strain ATCC BAA-1151 / DSM 17278 / SZ) (Geobacter lovleyi), this protein is GTPase Era.